The sequence spans 672 residues: F(420)H(2) dehydrogenase subunit L (672 aa).

16 helical membrane-spanning segments follow: residues E8 to G28, I37 to L57, I79 to I99, I136 to F156, V179 to F199, I225 to V245, T265 to A285, L298 to V318, M337 to F357, I360 to V380, V394 to I414, Y447 to M467, P483 to L503, L545 to I565, F601 to I621, and T652 to L672.

The protein belongs to the complex I subunit 5 family. In terms of assembly, the FPO complex is composed of at least 13 different subunits. FpoA, FpoH, FpoJ, FpoK, FpoL, FpoM and FpoN proteins constitute the membrane sector of the complex.

The protein localises to the cell membrane. The enzyme catalyses methanophenazine + reduced coenzyme F420-(gamma-L-Glu)(n) = dihydromethanophenazine + oxidized coenzyme F420-(gamma-L-Glu)(n) + H(+). In terms of biological role, component of the F(420)H(2) dehydrogenase (FPO complex) which is part of the energy-conserving F(420)H(2):heterodisulfide oxidoreductase system. The membrane-bound electron transfer system of the complex plays an important role in the metabolism of methylotrophic methanogens when the organisms grow on methanol or methylamines. Catalyzes the oxidation of methanophenazine to dihydromethanophenazine. It shuttles electrons from F(420)H(2), via FAD and iron-sulfur (Fe-S) centers, to methanophenazine (an electron carrier in the membrane). It couples the redox reaction to proton translocation (for every two electrons transferred, two hydrogen ions are translocated across the cytoplasmic membrane), and thus conserves the redox energy in a proton gradient. It also catalyzes the oxidation of F(420)H(2) with quinones such as 2,3-dimethyl-1,4-naphthoquinone, 2-methyl-1,4-naphthoquinone and tetramethyl-p-benzoquinone. This Methanosarcina mazei (strain ATCC BAA-159 / DSM 3647 / Goe1 / Go1 / JCM 11833 / OCM 88) (Methanosarcina frisia) protein is F(420)H(2) dehydrogenase subunit L (fpoL).